Here is a 297-residue protein sequence, read N- to C-terminus: Transmembrane protein 178A (297 aa).

A signal peptide spans 1 to 25 (MEPRALVTALSLGLSLCSLGLLVTA). The Extracellular segment spans residues 26–179 (IFTDHWYETD…LLHLRRITAG (154 aa)). Over residues 41–57 (ESCERSRAGADPPDQKN) the composition is skewed to basic and acidic residues. The segment at 41–86 (ESCERSRAGADPPDQKNRLMPLSHLPLRDSPPLGRRLLPGGPGRSD) is disordered. The segment covering 68–79 (RDSPPLGRRLLP) has biased composition (low complexity). N158 carries an N-linked (GlcNAc...) asparagine glycan. Residues 180–200 (FLGMAVAVLLCGCIVATVSFF) traverse the membrane as a helical segment. The Cytoplasmic segment spans residues 201 to 208 (WEESLTQH). The helical transmembrane segment at 209–229 (VAGLLFLMTGIFCTISLCTYA) threads the bilayer. Residues 230–257 (ASVSYDLNRVPKLIYSLPHDVEHGYSWS) are Extracellular-facing. A helical membrane pass occupies residues 258–278 (IFCAWCSLGFIVAAGGLCIAY). At 279–297 (PFISRTKIAHLKSGRDSTV) the chain is on the cytoplasmic side.

It belongs to the TMEM178 family. Interacts with STIM1.

It localises to the endoplasmic reticulum membrane. Functionally, acts as a negative regulator of osteoclast differentiation in basal and inflammatory conditions by regulating TNFSF11-induced Ca (2+) fluxes, thereby controlling the induction of NFATC1. The sequence is that of Transmembrane protein 178A (Tmem178a) from Rattus norvegicus (Rat).